The following is a 172-amino-acid chain: Large ribosomal subunit protein uL10 (172 aa).

This sequence belongs to the universal ribosomal protein uL10 family. Part of the ribosomal stalk of the 50S ribosomal subunit. The N-terminus interacts with L11 and the large rRNA to form the base of the stalk. The C-terminus forms an elongated spine to which L12 dimers bind in a sequential fashion forming a multimeric L10(L12)X complex.

Functionally, forms part of the ribosomal stalk, playing a central role in the interaction of the ribosome with GTP-bound translation factors. This chain is Large ribosomal subunit protein uL10 (rplJ), found in Liberibacter asiaticus (Citrus greening disease).